The sequence spans 403 residues: Exodeoxyribonuclease 7 large subunit (403 aa).

The protein belongs to the XseA family. Heterooligomer composed of large and small subunits.

The protein localises to the cytoplasm. It carries out the reaction Exonucleolytic cleavage in either 5'- to 3'- or 3'- to 5'-direction to yield nucleoside 5'-phosphates.. Functionally, bidirectionally degrades single-stranded DNA into large acid-insoluble oligonucleotides, which are then degraded further into small acid-soluble oligonucleotides. This Streptomyces griseus subsp. griseus (strain JCM 4626 / CBS 651.72 / NBRC 13350 / KCC S-0626 / ISP 5235) protein is Exodeoxyribonuclease 7 large subunit.